The chain runs to 82 residues: Nuclear protein 1 (82 aa).

The segment at Met-1 to Arg-82 is disordered. The span at Pro-17–Asp-28 shows a compositional bias: acidic residues. A Nuclear localization signal motif is present at residues Lys-65 to Arg-82.

Belongs to the NUPR family. As to quaternary structure, monomer. Directly interacts with MSL1 and binds MORF4L1, two components of histone acetyltransferase complex; the interaction with MORF4L1 may be mediated by MSL1. Interacts with EP300; this interaction enhances the effect of EP300 on PAX2 transcription factor activity. Interacts with PAXIP1; this interaction prevents PAXIP1 inhibition of PAX2 transcription factor activity. Interacts with COPS5; this interaction allows COPS5-dependent CDKN1B nuclear to cytoplasm translocation. Interacts with RNF2. Interacts with FOXO3; this interaction represses FOXO3 transactivation. Interacts with PTMA; negatively regulates apoptotic process. Interacts with MYOD1, EP300 and DDX5; this interaction coordinates the association of anti-proliferative and pro-myogenic proteins at the myogenin promoter. Interacts with TP53; interaction is stress-dependent. Forms a complex with EP300 and TP53; this complex binds CDKN1A promoter leading to transcriptional induction of CDKN1A. Phosphorylated in vitro by PKA and CK. Phosphorylation promotes DNA-binding activity. Post-translationally, acetylated by EP300 in vitro. Widely expressed, with high levels in liver, pancreas, prostate, ovary, colon, thyroid, spinal cord, trachea and adrenal gland, moderate levels in heart, placenta, lung, skeletal muscle, kidney, testis, small intestine, stomach and lymph node, and low levels in brain, spleen, thymus and bone marrow. Not detected in peripheral blood leukocytes.

The protein resides in the nucleus. It localises to the cytoplasm. It is found in the perinuclear region. Transcription regulator that converts stress signals into a program of gene expression that empowers cells with resistance to the stress induced by a change in their microenvironment. Thereby participates in the regulation of many processes namely cell-cycle, apoptosis, autophagy and DNA repair responses. Controls cell cycle progression and protects cells from genotoxic stress induced by doxorubicin through the complex formation with TP53 and EP300 that binds CDKN1A promoter leading to transcriptional induction of CDKN1A. Protects pancreatic cancer cells from stress-induced cell death by binding the RELB promoter and activating its transcription, leading to IER3 transactivation. Negatively regulates apoptosis through interaction with PTMA. Inhibits autophagy-induced apoptosis in cardiac cells through FOXO3 interaction, inducing cytoplasmic translocation of FOXO3 thereby preventing the FOXO3 association with the pro-autophagic BNIP3 promoter. Inhibits cell growth and facilitates programmed cell death by apoptosis after adriamycin-induced DNA damage through transactivation of TP53. Regulates methamphetamine-induced apoptosis and autophagy through DDIT3-mediated endoplasmic reticulum stress pathway. Participates in DNA repair following gamma-irradiation by facilitating DNA access of the transcription machinery through interaction with MSL1 leading to inhibition of histone H4' Lys-16' acetylation (H4K16ac). Coactivator of PAX2 transcription factor activity, both by recruiting EP300 to increase PAX2 transcription factor activity and by binding PAXIP1 to suppress PAXIP1-induced inhibition on PAX2. Positively regulates cell cycle progression through interaction with COPS5 inducing cytoplasmic translocation of CDKN1B leading to the CDKN1B degradation. Coordinates, through its interaction with EP300, the assiociation of MYOD1, EP300 and DDX5 to the MYOG promoter, leading to inhibition of cell-cycle progression and myogenic differentiation promotion. Negatively regulates beta cell proliferation via inhibition of cell-cycle regulatory genes expression through the suppression of their promoter activities. Also required for LHB expression and ovarian maturation. Exacerbates CNS inflammation and demyelination upon cuprizone treatment. The polypeptide is Nuclear protein 1 (Homo sapiens (Human)).